We begin with the raw amino-acid sequence, 352 residues long: MLQLDFHQQLGSLELHVQSELPANGITAIFGVSGAGKTSLINAVVGLTRPDGGRIVLNDHVLVDTQQRVFLPPEKRHIGYVFQDARLFPHYRVRGNLRYGMAEKMASQFDDIVNLLGIEHLLNRYPLTLSGGEKQRVAIGRALLTAPELLLMDEPLASLDLPRKRELLPYLERLAKEVNIPILYVSHSLEEIVRLADHVVVLDKGKVKAQGLLEEVWASSALRPWLPKDEQSSILSVRVLAQHEHYAMTALALDDQQVWVGKVELAQDAVLRIRVNAADVSLVLQPPEKSSIRNVLRASVEECIDVDGQVEVKLAVGQQTLWSRITPWARDDLALHPGQMLYAQIKSVSITA.

Residues 1–229 form the ABC transporter domain; that stretch reads MLQLDFHQQL…SALRPWLPKD (229 aa). Residue 31-38 participates in ATP binding; that stretch reads GVSGAGKT. The 64-residue stretch at 289-352 folds into the Mop domain; it reads KSSIRNVLRA…AQIKSVSITA (64 aa).

The protein belongs to the ABC transporter superfamily. Molybdate importer (TC 3.A.1.8) family. In terms of assembly, the complex is composed of two ATP-binding proteins (ModC), two transmembrane proteins (ModB) and a solute-binding protein (ModA).

The protein resides in the cell inner membrane. The enzyme catalyses molybdate(out) + ATP + H2O = molybdate(in) + ADP + phosphate + H(+). Functionally, part of the ABC transporter complex ModABC involved in molybdenum import. Responsible for energy coupling to the transport system. The chain is Molybdenum import ATP-binding protein ModC from Pectobacterium atrosepticum (strain SCRI 1043 / ATCC BAA-672) (Erwinia carotovora subsp. atroseptica).